The primary structure comprises 203 residues: Proteasome subunit beta 1 (203 aa).

The propeptide at 1–7 is removed in mature form; by autocatalysis; it reads MTEKLKG. The Nucleophile role is filled by Thr-8.

The protein belongs to the peptidase T1B family. As to quaternary structure, the 20S proteasome core is composed of 14 alpha and 14 beta subunits that assemble into four stacked heptameric rings, resulting in a barrel-shaped structure. The two inner rings, each composed of seven catalytic beta subunits, are sandwiched by two outer rings, each composed of seven alpha subunits. The catalytic chamber with the active sites is on the inside of the barrel. Has a gated structure, the ends of the cylinder being occluded by the N-termini of the alpha-subunits. Is capped at one or both ends by the proteasome regulatory ATPase, PAN.

It localises to the cytoplasm. The enzyme catalyses Cleavage of peptide bonds with very broad specificity.. With respect to regulation, the formation of the proteasomal ATPase PAN-20S proteasome complex, via the docking of the C-termini of PAN into the intersubunit pockets in the alpha-rings, triggers opening of the gate for substrate entry. Interconversion between the open-gate and close-gate conformations leads to a dynamic regulation of the 20S proteasome proteolysis activity. Its function is as follows. Component of the proteasome core, a large protease complex with broad specificity involved in protein degradation. The chain is Proteasome subunit beta 1 from Thermococcus kodakarensis (strain ATCC BAA-918 / JCM 12380 / KOD1) (Pyrococcus kodakaraensis (strain KOD1)).